Reading from the N-terminus, the 331-residue chain is 6-phosphogluconolactonase (331 aa).

N6-acetyllysine is present on Lys287.

This sequence belongs to the cycloisomerase 2 family.

The enzyme catalyses 6-phospho-D-glucono-1,5-lactone + H2O = 6-phospho-D-gluconate + H(+). It participates in carbohydrate degradation; pentose phosphate pathway; D-ribulose 5-phosphate from D-glucose 6-phosphate (oxidative stage): step 2/3. Its function is as follows. Catalyzes the hydrolysis of 6-phosphogluconolactone to 6-phosphogluconate. The polypeptide is 6-phosphogluconolactonase (Escherichia coli O127:H6 (strain E2348/69 / EPEC)).